The chain runs to 379 residues: UDP-4-amino-4-deoxy-L-arabinose--oxoglutarate aminotransferase (379 aa).

Lysine 182 bears the N6-(pyridoxal phosphate)lysine mark.

This sequence belongs to the DegT/DnrJ/EryC1 family. ArnB subfamily. Homodimer. Requires pyridoxal 5'-phosphate as cofactor.

It carries out the reaction UDP-4-amino-4-deoxy-beta-L-arabinose + 2-oxoglutarate = UDP-beta-L-threo-pentopyranos-4-ulose + L-glutamate. Its pathway is nucleotide-sugar biosynthesis; UDP-4-deoxy-4-formamido-beta-L-arabinose biosynthesis; UDP-4-deoxy-4-formamido-beta-L-arabinose from UDP-alpha-D-glucuronate: step 2/3. It participates in bacterial outer membrane biogenesis; lipopolysaccharide biosynthesis. In terms of biological role, catalyzes the conversion of UDP-4-keto-arabinose (UDP-Ara4O) to UDP-4-amino-4-deoxy-L-arabinose (UDP-L-Ara4N). The modified arabinose is attached to lipid A and is required for resistance to polymyxin and cationic antimicrobial peptides. This is UDP-4-amino-4-deoxy-L-arabinose--oxoglutarate aminotransferase from Escherichia coli (strain ATCC 8739 / DSM 1576 / NBRC 3972 / NCIMB 8545 / WDCM 00012 / Crooks).